Here is a 353-residue protein sequence, read N- to C-terminus: Probable transport protein YPL264C (353 aa).

The Cytoplasmic portion of the chain corresponds to 1-16; sequence MTLQRISKDYLKPNYG. A helical membrane pass occupies residues 17 to 37; that stretch reads LILLIVSYFFNSSMVVSTKVL. Residues 24 to 160 form the EamA 1 domain; sequence YFFNSSMVVS…SFSGVVLIIR (137 aa). The Extracellular segment spans residues 38–51; sequence ENDPLETSQSRINP. A helical membrane pass occupies residues 52-69; the sequence is LQILLVRMSITYCCTLVY. Over 70–94 the chain is Cytoplasmic; that stretch reads MHWNKQSVPDIPWGPAPCRKWLILR. The chain crosses the membrane as a helical span at residues 95-115; the sequence is GIMGFFGVFGMYFSLMYLSIS. Asp-116 is a topological domain (extracellular). A helical transmembrane segment spans residues 117-137; sequence AVLITFMSPTLTIFLSFLLLG. The Cytoplasmic segment spans residues 138-144; that stretch reads EPFSKLE. Residues 145 to 165 traverse the membrane as a helical segment; that stretch reads ALGSLISFSGVVLIIRPTFLF. Over 166–188 the chain is Extracellular; the sequence is GEQTQGQQSPQDDIVETQNPKLR. Residues 189–209 form a helical membrane-spanning segment; it reads LIAIGVSLLGVCGLSSVYIII. The EamA 2 domain occupies 200–326; sequence CGLSSVYIII…IVSSTIWVIN (127 aa). At 210–218 the chain is on the cytoplasmic side; the sequence is RYIGNKAHA. Residues 219 to 239 form a helical membrane-spanning segment; the sequence is IMSVSYFSLVTTVVAALGVLL. At 240 to 254 the chain is on the extracellular side; that stretch reads IPSMSLQLPHSWKQW. The helical transmembrane segment at 255 to 275 threads the bilayer; sequence GLFLNLGISGFIHQILLTMGI. Topologically, residues 276–282 are cytoplasmic; that stretch reads QRERAGR. A helical membrane pass occupies residues 283–303; sequence GSLMTYTQVIYAVFWDVVLFH. Position 304 (His-304) is a topological domain, extracellular. Residues 305–325 traverse the membrane as a helical segment; sequence WPNIWTWCGMAVIVSSTIWVI. The Cytoplasmic portion of the chain corresponds to 326-353; that stretch reads NMRASKQNVVATAELLSTSDFELDDLED.

Its subcellular location is the membrane. The chain is Probable transport protein YPL264C from Saccharomyces cerevisiae (strain ATCC 204508 / S288c) (Baker's yeast).